Consider the following 179-residue polypeptide: Large ribosomal subunit protein uL5 (179 aa).

This sequence belongs to the universal ribosomal protein uL5 family. As to quaternary structure, part of the 50S ribosomal subunit; part of the 5S rRNA/L5/L18/L25 subcomplex. Contacts the 5S rRNA and the P site tRNA. Forms a bridge to the 30S subunit in the 70S ribosome.

This is one of the proteins that bind and probably mediate the attachment of the 5S RNA into the large ribosomal subunit, where it forms part of the central protuberance. In the 70S ribosome it contacts protein S13 of the 30S subunit (bridge B1b), connecting the 2 subunits; this bridge is implicated in subunit movement. Contacts the P site tRNA; the 5S rRNA and some of its associated proteins might help stabilize positioning of ribosome-bound tRNAs. The sequence is that of Large ribosomal subunit protein uL5 from Shewanella piezotolerans (strain WP3 / JCM 13877).